We begin with the raw amino-acid sequence, 153 residues long: Ribosome maturation factor RimP (153 aa).

The protein belongs to the RimP family.

Its subcellular location is the cytoplasm. Its function is as follows. Required for maturation of 30S ribosomal subunits. The sequence is that of Ribosome maturation factor RimP from Synechococcus elongatus (strain ATCC 33912 / PCC 7942 / FACHB-805) (Anacystis nidulans R2).